A 274-amino-acid chain; its full sequence is MRLAVTGVTGRMGKSIIQRIIQTQAHQVDNKFILGAAIARDRSDICGIDAGTFVQSSKVGVFITDNIELVKGDFDVLIDFTAPESTMNYVNFCVMNNKNMVIGTTGLSKSYLSVIERASSKIGIVYSANFSVGITIMLKLLNSVSKISRYFVNIDIVESHHNKKKDIPSGTALLIRNVVEYNQFSDCVCNEDLVSNGEKKYGKLDNDIKIHSIRAGDIVGEHSVLCTSIGERLEIKHQAFNRIIFVDGALRSAVWLGCAKIGLFDLNNVLKINM.

7-12 (GVTGRM) serves as a coordination point for NAD(+). R40 is a binding site for NADP(+). Residues 103–105 (GTT) and 127–130 (SANF) contribute to the NAD(+) site. Catalysis depends on H160, which acts as the Proton donor/acceptor. Position 161 (H161) interacts with (S)-2,3,4,5-tetrahydrodipicolinate. Residue K164 is the Proton donor of the active site. 170-171 (GT) serves as a coordination point for (S)-2,3,4,5-tetrahydrodipicolinate.

It belongs to the DapB family. Homotetramer.

Its subcellular location is the cytoplasm. The enzyme catalyses (S)-2,3,4,5-tetrahydrodipicolinate + NAD(+) + H2O = (2S,4S)-4-hydroxy-2,3,4,5-tetrahydrodipicolinate + NADH + H(+). It catalyses the reaction (S)-2,3,4,5-tetrahydrodipicolinate + NADP(+) + H2O = (2S,4S)-4-hydroxy-2,3,4,5-tetrahydrodipicolinate + NADPH + H(+). It participates in amino-acid biosynthesis; L-lysine biosynthesis via DAP pathway; (S)-tetrahydrodipicolinate from L-aspartate: step 4/4. Its function is as follows. Catalyzes the conversion of 4-hydroxy-tetrahydrodipicolinate (HTPA) to tetrahydrodipicolinate. In Blochmanniella floridana, this protein is 4-hydroxy-tetrahydrodipicolinate reductase.